Reading from the N-terminus, the 122-residue chain is Large ribosomal subunit protein uL22 (122 aa).

It belongs to the universal ribosomal protein uL22 family. Part of the 50S ribosomal subunit.

Its function is as follows. This protein binds specifically to 23S rRNA; its binding is stimulated by other ribosomal proteins, e.g. L4, L17, and L20. It is important during the early stages of 50S assembly. It makes multiple contacts with different domains of the 23S rRNA in the assembled 50S subunit and ribosome. In terms of biological role, the globular domain of the protein is located near the polypeptide exit tunnel on the outside of the subunit, while an extended beta-hairpin is found that lines the wall of the exit tunnel in the center of the 70S ribosome. The polypeptide is Large ribosomal subunit protein uL22 (Caldicellulosiruptor saccharolyticus (strain ATCC 43494 / DSM 8903 / Tp8T 6331)).